We begin with the raw amino-acid sequence, 413 residues long: Putative F-box/kelch-repeat protein At3g22870 (413 aa).

The F-box domain occupies 2–53; it reads TLTISDLPRDLKKKIFSRIPLRYVRALRLTCKEWETLIKSRSLKIDEEESQM. Kelch repeat units lie at residues 156–202 and 331–379; these read LLRF…IGVS and KVFI…RRRQ.

The polypeptide is Putative F-box/kelch-repeat protein At3g22870 (Arabidopsis thaliana (Mouse-ear cress)).